Consider the following 314-residue polypeptide: Small ribosomal subunit protein uS11m (314 aa).

Residues 1–37 constitute a mitochondrion transit peptide; it reads MNGVSRHLRASSLLSLIRSYGGINSVCRFSSQSDGFS. The disordered stretch occupies residues 34–138; the sequence is DGFSGGRFRE…GSGFSAPSLS (105 aa). Over residues 50–63 the composition is skewed to polar residues; sequence ESANNSGLSNTGRI. Over residues 103–114 the composition is skewed to low complexity; sequence SSLRSRLPNSLP.

The protein belongs to the universal ribosomal protein uS11 family. As to quaternary structure, component of the mitochondrial ribosome small subunit (28S) which comprises a 12S rRNA and about 30 distinct proteins.

It localises to the mitochondrion. Its function is as follows. Required for karyogamy during female gametophyte development, when the two polar nuclei fuse to form the diploid central cell nucleus. This is Small ribosomal subunit protein uS11m from Arabidopsis thaliana (Mouse-ear cress).